A 940-amino-acid polypeptide reads, in one-letter code: MSDYKSTLNLPETEFPMRGNLANREPEMLKSWNEKGLYQQIRESRKDSKPFILHDGPPYANGDIHIGHSVNKILKDIIIKSKTMSGFDAPYIPGWDCHGLPIELKVEQKVGKPGHKVTASEFRQKCREYAAKQVDGQRDDFIRLGVFADWQNPYLTMDYNTEANIVRSLSKVIDSGHLHKGVKPVHWCTDCGSALAEAEVEYEDKMSPAIDVAFTAVDKPALLAKFGLTEYAHPISMVIWTTTPWTLPANRALSVAGQLEYTLVEMVKDGQTQALVLAQELVESCVERFGAETHKVLANVLGSELELLRFNHPFYDFDVPVILGEHVTVESGTGVVHTAPGHGQDDFVVGQKYGLEVANPVGDNGVYKADTEIFAGQHVFKANKAVVALLEEKGALLNHVAINHSYPHCWRHKTPIIFRATPQWFISMDQKGLRTQALSEIEKTQWIPDWGQSRIEKMVENRPDWCISRQRTWGVPITLFVHRETEELHPDSVSLMERVANRIEQEGIQAWWDLDAAELLGDEAEQYRKVTDTLDVWYDSGSTFSSVVASRPEFNGHEVDLYLEGSDQHRGWFMSSLMISTAMNGKAPYKQVLTHGFTVDGKGRKMSKSVGNVIAPQHVTNKLGADILRLWVAATDYSGEMTVSDEILKRSADAYRRIRNTARFLLANINGFNPETDMVAVEDMVALDRWVVRRAAALQQELLEAYDQYNFHLVTQKLMQFCSVELGSFYLDIIKDRQYTAKDDSNARRSCQSALYLISEAMVRWIAPVLSFTADEIWKLLPGERGEFVFTETWYEGLQSVTLDSDLSDEFWEQLLTVRAEVNKVIENARREKQIGGSLEAEIMLFADEALSTALSTLGDELRFVLLTSKTDVVALSEAPADAIETELASLKLGLKKSEAEKCERCWHHREEVGQVAEHPTLCTRCVTNIEGEGETRQFA.

The short motif at 58–68 is the 'HIGH' region element; that stretch reads PYANGDIHIGH. E564 serves as a coordination point for L-isoleucyl-5'-AMP. The short motif at 605-609 is the 'KMSKS' region element; the sequence is KMSKS. Residue K608 participates in ATP binding. The Zn(2+) site is built by C903, C906, C923, and C926.

The protein belongs to the class-I aminoacyl-tRNA synthetase family. IleS type 1 subfamily. As to quaternary structure, monomer. Requires Zn(2+) as cofactor.

It localises to the cytoplasm. It catalyses the reaction tRNA(Ile) + L-isoleucine + ATP = L-isoleucyl-tRNA(Ile) + AMP + diphosphate. In terms of biological role, catalyzes the attachment of isoleucine to tRNA(Ile). As IleRS can inadvertently accommodate and process structurally similar amino acids such as valine, to avoid such errors it has two additional distinct tRNA(Ile)-dependent editing activities. One activity is designated as 'pretransfer' editing and involves the hydrolysis of activated Val-AMP. The other activity is designated 'posttransfer' editing and involves deacylation of mischarged Val-tRNA(Ile). The chain is Isoleucine--tRNA ligase from Shewanella piezotolerans (strain WP3 / JCM 13877).